We begin with the raw amino-acid sequence, 182 residues long: Dynactin subunit 5 (182 aa).

Position 1 is an N-acetylmethionine (methionine 1).

Belongs to the dynactin subunits 5/6 family. Dynactin subunit 5 subfamily. Subunit of dynactin, a multiprotein complex part of a tripartite complex with dynein and a adapter, such as BICDL1, BICD2 or HOOK3. The dynactin complex is built around ACTR1A/ACTB filament and consists of an actin-related filament composed of a shoulder domain, a pointed end and a barbed end. Its length is defined by its flexible shoulder domain. The soulder is composed of 2 DCTN1 subunits, 4 DCTN2 and 2 DCTN3. The 4 DCNT2 (via N-terminus) bind the ACTR1A filament and act as molecular rulers to determine the length. The pointed end is important for binding dynein-dynactin cargo adapters. Consists of 4 subunits: ACTR10, DCNT4, DCTN5 and DCTN6. Within the complex DCTN6 forms a heterodimer with DCTN5. The barbed end is composed of a CAPZA1:CAPZB heterodimers, which binds ACTR1A/ACTB filament and dynactin and stabilizes dynactin. Interacts with N4BP2L1.

It is found in the cytoplasm. The protein resides in the cytoskeleton. The protein localises to the chromosome. It localises to the centromere. Its subcellular location is the kinetochore. Functionally, part of the dynactin complex that activates the molecular motor dynein for ultra-processive transport along microtubules. The protein is Dynactin subunit 5 (DCTN5) of Pongo abelii (Sumatran orangutan).